A 321-amino-acid chain; its full sequence is MATH domain and coiled-coil domain-containing protein At3g58410 (321 aa).

The region spanning 6–128 (GKKFAWVIKN…NGELMIVAEV (123 aa)) is the MATH domain. Positions 255–310 (KVDWLEKKLDQVRDKKEKERSCLAKLQETEETLLKLKQKCTELDALMDTEKAELSA) form a coiled coil.

The sequence is that of MATH domain and coiled-coil domain-containing protein At3g58410 from Arabidopsis thaliana (Mouse-ear cress).